We begin with the raw amino-acid sequence, 138 residues long: Phosphoribosyl-AMP cyclohydrolase (138 aa).

Aspartate 86 contributes to the Mg(2+) binding site. Position 87 (cysteine 87) interacts with Zn(2+). Positions 88 and 90 each coordinate Mg(2+). Positions 104 and 111 each coordinate Zn(2+).

Belongs to the PRA-CH family. Homodimer. The cofactor is Mg(2+). Requires Zn(2+) as cofactor.

Its subcellular location is the cytoplasm. The catalysed reaction is 1-(5-phospho-beta-D-ribosyl)-5'-AMP + H2O = 1-(5-phospho-beta-D-ribosyl)-5-[(5-phospho-beta-D-ribosylamino)methylideneamino]imidazole-4-carboxamide. It functions in the pathway amino-acid biosynthesis; L-histidine biosynthesis; L-histidine from 5-phospho-alpha-D-ribose 1-diphosphate: step 3/9. Its function is as follows. Catalyzes the hydrolysis of the adenine ring of phosphoribosyl-AMP. The sequence is that of Phosphoribosyl-AMP cyclohydrolase from Marinobacter nauticus (strain ATCC 700491 / DSM 11845 / VT8) (Marinobacter aquaeolei).